The sequence spans 904 residues: Protein translocase subunit SecA (904 aa).

ATP contacts are provided by residues glutamine 87, 105–109 (GEGKT), and aspartate 512. Positions 851–870 (LARQQQLSHQTDNSALMSEE) are disordered. Zn(2+)-binding residues include cysteine 888, cysteine 890, cysteine 899, and histidine 900.

The protein belongs to the SecA family. As to quaternary structure, monomer and homodimer. Part of the essential Sec protein translocation apparatus which comprises SecA, SecYEG and auxiliary proteins SecDF-YajC and YidC. It depends on Zn(2+) as a cofactor.

The protein resides in the cell inner membrane. The protein localises to the cytoplasm. The enzyme catalyses ATP + H2O + cellular proteinSide 1 = ADP + phosphate + cellular proteinSide 2.. Functionally, part of the Sec protein translocase complex. Interacts with the SecYEG preprotein conducting channel. Has a central role in coupling the hydrolysis of ATP to the transfer of proteins into and across the cell membrane, serving both as a receptor for the preprotein-SecB complex and as an ATP-driven molecular motor driving the stepwise translocation of polypeptide chains across the membrane. The protein is Protein translocase subunit SecA of Yersinia pseudotuberculosis serotype O:1b (strain IP 31758).